A 376-amino-acid chain; its full sequence is Chaperone protein DnaJ (376 aa).

The 67-residue stretch at 4 to 70 (DYYQILGVSK…QKRAAYDRFG (67 aa)) folds into the J domain. A CR-type zinc finger spans residues 139 to 217 (GVEKNISFSS…CHGLGRYHKQ (79 aa)). The Zn(2+) site is built by Cys152, Cys155, Cys169, Cys172, Cys191, Cys194, Cys205, and Cys208. 4 CXXCXGXG motif repeats span residues 152–159 (CDTCHGSG), 169–176 (CDACGGVG), 191–198 (CHKCQGNG), and 205–212 (CKKCHGLG).

It belongs to the DnaJ family. In terms of assembly, homodimer. Zn(2+) serves as cofactor.

The protein resides in the cytoplasm. In terms of biological role, participates actively in the response to hyperosmotic and heat shock by preventing the aggregation of stress-denatured proteins and by disaggregating proteins, also in an autonomous, DnaK-independent fashion. Unfolded proteins bind initially to DnaJ; upon interaction with the DnaJ-bound protein, DnaK hydrolyzes its bound ATP, resulting in the formation of a stable complex. GrpE releases ADP from DnaK; ATP binding to DnaK triggers the release of the substrate protein, thus completing the reaction cycle. Several rounds of ATP-dependent interactions between DnaJ, DnaK and GrpE are required for fully efficient folding. Also involved, together with DnaK and GrpE, in the DNA replication of plasmids through activation of initiation proteins. In Rickettsia bellii (strain OSU 85-389), this protein is Chaperone protein DnaJ.